Consider the following 437-residue polypeptide: Aminopeptidase G (437 aa).

Active-site residues include Cys70, His361, and Asn382.

The protein belongs to the peptidase C1 family.

It localises to the cytoplasm. In Lactobacillus delbrueckii subsp. lactis, this protein is Aminopeptidase G (pepG).